A 306-amino-acid polypeptide reads, in one-letter code: MNYNCEIQNRNSKNVDNQVSLPPIQVLFNSIEKRSMPELAFSNIEYSHGNLRSSTEEQNYPAPVLLPQHHSIAYPAINSGGTSTTATPTASTVETSKTSSSAMDTQSQYGSSKKSKSASDDAKPCYKSAPIYEIINKEKDAGAQYNRPFSDFVESKSRRKQNSGRRSNLPKETVQILNTWLLNHLNNPYPTQQEKRELLIKTGLTKIQLSNWFINVRRRKIFSDYYTLVNSIPNDNANNTPVERVQNVSAYHNTLSATNNTMYDATSTCSTDYELSKRFAHAPVTRRKKLIDRLEELKKLSNPDMN.

The interval 75–123 (PAINSGGTSTTATPTASTVETSKTSSSAMDTQSQYGSSKKSKSASDDAK) is disordered. Residues 79–96 (SGGTSTTATPTASTVETS) are compositionally biased toward low complexity. Residues 97 to 110 (KTSSSAMDTQSQYG) show a composition bias toward polar residues. The homeobox; TALE-type DNA-binding region spans 162–224 (NSGRRSNLPK…NVRRRKIFSD (63 aa)).

Belongs to the TALE/CUP9 homeobox family.

It is found in the nucleus. In terms of biological role, probable DNA-binding protein which plays a role in protecting yeast cells against copper toxicity. May regulate the expression of important copper homeostatic genes. This is Homeobox protein CUP9 (CUP9) from Saccharomyces cerevisiae (strain ATCC 204508 / S288c) (Baker's yeast).